Consider the following 156-residue polypeptide: Glutaredoxin-2, mitochondrial (156 aa).

Residues 1-19 constitute a mitochondrion transit peptide; that stretch reads MSWRRAASVGRRLVASGRI. The 101-residue stretch at 50-150 folds into the Glutaredoxin domain; that stretch reads VNQIQETISN…PLVHQCYLKK (101 aa). Position 61 (Cys61) interacts with [2Fe-2S] cluster. Lys67 contributes to the glutathione binding site. Residue Cys70 is modified to S-glutathionyl cysteine; alternate. Cys70 and Cys73 are disulfide-bonded. Positions 102 and 114 each coordinate glutathione. Cys146 is a binding site for [2Fe-2S] cluster.

The protein belongs to the glutaredoxin family. Monomer; active form. Homodimer; inactive form. The homodimer is probably linked by 1 2Fe-2S cluster. As to expression, widely expressed. Highly expressed in testis, and at much lower level in kidney and brain.

It localises to the mitochondrion. It is found in the nucleus. The 2Fe-2S present in the homodimer leads to inactivation of the enzyme. The 2Fe-2S may serve as a redox sensor: the presence of one-electron oxidants or reductants leading to the loss of the 2Fe-2S cluster, subsequent monomerization and activation of the enzyme. Functionally, glutathione-dependent oxidoreductase that facilitates the maintenance of mitochondrial redox homeostasis upon induction of apoptosis by oxidative stress. Involved in response to hydrogen peroxide and regulation of apoptosis caused by oxidative stress. Acts as a very efficient catalyst of monothiol reactions because of its high affinity for protein glutathione-mixed disulfides. Can receive electrons not only from glutathione (GSH), but also from thioredoxin reductase supporting both monothiol and dithiol reactions. Efficiently catalyzes both glutathionylation and deglutathionylation of mitochondrial complex I, which in turn regulates the superoxide production by the complex. Overexpression decreases the susceptibility to apoptosis and prevents loss of cardiolipin and cytochrome c release. The polypeptide is Glutaredoxin-2, mitochondrial (Glrx2) (Mus musculus (Mouse)).